A 64-amino-acid chain; its full sequence is Large ribosomal subunit protein bL35 (64 aa).

Residues 1–22 are compositionally biased toward basic residues; sequence MPKMKSHTGMGKRVRVTGKGKI. A disordered region spans residues 1 to 28; that stretch reads MPKMKSHTGMGKRVRVTGKGKIVKQQAG.

It belongs to the bacterial ribosomal protein bL35 family.

In Salinispora tropica (strain ATCC BAA-916 / DSM 44818 / JCM 13857 / NBRC 105044 / CNB-440), this protein is Large ribosomal subunit protein bL35.